A 692-amino-acid polypeptide reads, in one-letter code: Elongation factor G (692 aa).

Residues 8 to 283 (NRIRNIGIAA…AVIDYLPAPT (276 aa)) enclose the tr-type G domain. Residues 17-24 (AHIDAGKT), 81-85 (DTPGH), and 135-138 (NKMD) each bind GTP.

Belongs to the TRAFAC class translation factor GTPase superfamily. Classic translation factor GTPase family. EF-G/EF-2 subfamily.

It localises to the cytoplasm. Its function is as follows. Catalyzes the GTP-dependent ribosomal translocation step during translation elongation. During this step, the ribosome changes from the pre-translocational (PRE) to the post-translocational (POST) state as the newly formed A-site-bound peptidyl-tRNA and P-site-bound deacylated tRNA move to the P and E sites, respectively. Catalyzes the coordinated movement of the two tRNA molecules, the mRNA and conformational changes in the ribosome. In Helicobacter pylori (strain G27), this protein is Elongation factor G.